The following is a 314-amino-acid chain: Homoserine kinase (314 aa).

96–106 (PIGSGLGSSAC) is a binding site for ATP.

This sequence belongs to the GHMP kinase family. Homoserine kinase subfamily.

It is found in the cytoplasm. The catalysed reaction is L-homoserine + ATP = O-phospho-L-homoserine + ADP + H(+). The protein operates within amino-acid biosynthesis; L-threonine biosynthesis; L-threonine from L-aspartate: step 4/5. Functionally, catalyzes the ATP-dependent phosphorylation of L-homoserine to L-homoserine phosphate. This is Homoserine kinase from Haemophilus influenzae (strain PittEE).